Reading from the N-terminus, the 487-residue chain is Phosphatidylserine synthase 2 (487 aa).

Residues 1-10 are compositionally biased toward basic and acidic residues; the sequence is MRRGERRDAG. The tract at residues 1 to 50 is disordered; sequence MRRGERRDAGGPRPESPVPAGRASLEEPPDGPSAGQATGPGEGRRSTESE. Residues 1–62 lie on the Cytoplasmic side of the membrane; it reads MRRGERRDAG…DDGTNTFFWR (62 aa). Residues S16 and S24 each carry the phosphoserine modification. The helical transmembrane segment at 63–83 threads the bilayer; the sequence is AHTLTVLFILTCTLGYVTLLE. Topologically, residues 84–96 are lumenal; that stretch reads ETPQDTAYNTKRG. A helical membrane pass occupies residues 97–117; it reads IVASILVFLCFGVTQAKDGPF. The Cytoplasmic portion of the chain corresponds to 118 to 126; that stretch reads SRPHPAYWR. Residues 127-147 traverse the membrane as a helical segment; the sequence is FWLCVSVVYELFLIFILFQTV. The Lumenal segment spans residues 148–313; sequence QDGRQFLKYV…EWKPASSLRR (166 aa). N181 is a glycosylation site (N-linked (GlcNAc...) asparagine). Residues 314 to 334 traverse the membrane as a helical segment; the sequence is WLAVCGIILVFLLAELNTFYL. K335 is a topological domain (cytoplasmic). A helical membrane pass occupies residues 336 to 356; the sequence is FVLWMPPEHYLVLLRLVFFVN. Topologically, residues 357 to 376 are lumenal; it reads VGGVAMREIYDFMDDPKPHK. The chain crosses the membrane as a helical span at residues 377–397; the sequence is KLGPQAWLVAAITATELLIVV. Residues 398–403 lie on the Cytoplasmic side of the membrane; that stretch reads KYDPHT. A helical transmembrane segment spans residues 404–424; the sequence is LTLSLPFYISQCWTLGSVLAL. Over 425–487 the chain is Lumenal; sequence TWTVWRFFLR…AEGEGAPTPN (63 aa). The disordered stretch occupies residues 451-487; sequence KDDQGSTVGNGDQHPLGLDEDLLGPGVAEGEGAPTPN. Position 485 is a phosphothreonine (T485).

Belongs to the phosphatidyl serine synthase family.

The protein resides in the endoplasmic reticulum membrane. The enzyme catalyses a 1,2-diacyl-sn-glycero-3-phosphoethanolamine + L-serine = a 1,2-diacyl-sn-glycero-3-phospho-L-serine + ethanolamine. It catalyses the reaction 1-hexadecanoyl-2-(9Z-octadecenoyl)-sn-glycero-3-phosphoethanolamine + L-serine = 1-hexadecanoyl-2-(9Z-octadecenoyl)-sn-glycero-3-phospho-L-serine + ethanolamine. The catalysed reaction is 1-hexadecanoyl-2-(4Z,7Z,10Z,13Z,16Z,19Z-docosahexaenoyl)-sn-glycero-3-phosphoethanolamine + L-serine = 1-hexadecanoyl-2-(4Z,7Z,10Z,13Z,16Z,19Z-docosahexaenoyl)-sn-glycero-3-phosphoserine + ethanolamine. It carries out the reaction 1-octadecanoyl-2-(5Z,8Z,11Z,14Z)-eicosatetraenoyl-sn-glycero-3-phosphoethanolamine + L-serine = 1-octadecanoyl-2-(5Z,8Z,11Z,14Z)-eicosatetraenoyl-sn-glycero-3-phosphoserine + ethanolamine. The enzyme catalyses 1-octadecanoyl-2-(4Z,7Z,10Z,13Z,16Z,19Z-docosahexaenoyl)-sn-glycero-3-phosphoethanolamine + L-serine = 1-octadecanoyl-2-(4Z,7Z,10Z,13Z,16Z,19Z-docosahexaenoyl)-sn-glycero-3-phosphoserine + ethanolamine. It catalyses the reaction 1-(1Z-octadecenyl)-2-(4Z,7Z,10Z,13Z,16Z,19Z-docosahexaenoyl)-sn-glycero-3-phosphoethanolamine + L-serine = 1-(1Z-octadecenyl)-2-(4Z,7Z,10Z,13Z,16Z,19Z-docosahexaenoyl)-sn-glycero-3-phospho-L-serine + ethanolamine. The catalysed reaction is 1-octadecanoyl-2-(9Z-octadecenoyl)-sn-glycero-3-phosphoethanolamine + L-serine = 1-octadecanoyl-2-(9Z-octadecenoyl)-sn-glycero-3-phospho-L-serine + ethanolamine. It carries out the reaction 1-(1Z-octadecenyl)-2-(9Z-octadecenoyl)-sn-glycero-3-phosphoethanolamine + L-serine = 1-(1Z-octadecenyl)-2-(9Z-octadecenoyl)-sn-glycero-3-phospho-L-serine + ethanolamine. The enzyme catalyses 1-(1Z-octadecenyl)-2-(5Z,8Z,11Z,14Z- eicosatetraenoyl)-sn-glycero-3-phosphoethanolamine + L-serine = 1-(1Z-octadecenyl)-2-(5Z,8Z,11Z,14Z-eicosatetraenoyl)-sn-glycero-3-phospho-L-serine + ethanolamine. It participates in phospholipid metabolism; phosphatidylserine biosynthesis. With respect to regulation, requires calcium ions. Inhibited by exogenous phosphatidylserine. Functionally, catalyzes a base-exchange reaction in which the polar head group of phosphatidylethanolamine (PE) or phosphatidylcholine (PC) is replaced by L-serine. Catalyzes the conversion of phosphatatidylethanolamine and does not act on phosphatidylcholine. Can utilize both phosphatidylethanolamine (PE) plasmalogen and diacyl PE as substrate and the latter is six times better utilized, indicating the importance of an ester linkage at the sn-1 position. Although it shows no sn-1 fatty acyl preference, exhibits significant preference towards docosahexaenoic acid (22:6n-3) compared with 18:1 or 20:4 at the sn-2 position. The protein is Phosphatidylserine synthase 2 (PTDSS2) of Homo sapiens (Human).